A 73-amino-acid chain; its full sequence is Excelsatoxin A (73 aa).

The N-terminal stretch at M1 to A20 is a signal peptide. A propeptide spanning residues D21–D37 is cleaved from the precursor. 3 disulfide bridges follow: C41–C58, C46–C60, and C54–C69.

The protein belongs to the gympietide family. In terms of tissue distribution, expressed in trichomes, that are stiff epidermal hairs located on the surface of petioles and leaves. Not expressed in other aerial parts.

The protein localises to the secreted. Its function is as follows. Neurotoxin certainly responsible for the defensive, persistent, and painful stings of the giant stinging tree. Inhibits inactivation of Nav1.7/SCN9A sodium channel in sensory neurons by directly interacting with TMEM233, a newly described Nav-interacting protein. Has virtually no effect on Nav1.7/SCN9A function in heterologous expression systems and in neurons that do not express TMEM233. Also weakly but significantly affects Nav1.8/SCN10A. Coexpression of TMEM233 with Nav also confers ExTxA sensitivity to Nav1.1-Nav1.6. On the Nav1.7/SCN9A channel, causes a significant hyperpolarizing shift in the voltage dependence of activation. Its effects on Nav currents are irreversible, with no apparent reduction in activity even after repeated wash steps over 30 minutes. Does not show activity on Nav1.9/SCN11A. Does not show insecticidal activities. In vivo, induces nocifensive behavior in mice (licking or biting and shaking or lifting of the affected paw) lasting for approximately 1 hour. In Dendrocnide excelsa (Giant stinging tree), this protein is Excelsatoxin A.